Consider the following 288-residue polypeptide: Alpha/beta hydrolase domain-containing protein 17B (288 aa).

Residues Ser-170, Asp-235, and His-264 each act as charge relay system in the active site.

This sequence belongs to the AB hydrolase superfamily. ABHD17 family. Post-translationally, palmitoylated on cysteine residues located in a cysteine cluster at the N-terminus which promotes membrane localization.

It is found in the cell membrane. Its subcellular location is the recycling endosome membrane. The protein resides in the cell projection. The protein localises to the dendritic spine. It localises to the postsynaptic density membrane. The enzyme catalyses S-hexadecanoyl-L-cysteinyl-[protein] + H2O = L-cysteinyl-[protein] + hexadecanoate + H(+). Hydrolyzes fatty acids from S-acylated cysteine residues in proteins. Has depalmitoylating activity towards NRAS. In Gallus gallus (Chicken), this protein is Alpha/beta hydrolase domain-containing protein 17B.